A 101-amino-acid polypeptide reads, in one-letter code: Apolipoprotein C-II (101 aa).

The signal sequence occupies residues 1–22 (MGTRFLLALFLVLLVLGFEVQG). The interval 66–74 (TVDEKLRDM) is lipid binding. The lipoprotein lipase cofactor stretch occupies residues 78 to 101 (STAAMSTYAGILTDQVLSMLKGEE).

The protein belongs to the apolipoprotein C2 family. Post-translationally, proapolipoprotein C-II is synthesized as a sialic acid containing glycoprotein which is subsequently desialylated prior to its proteolytic processing. Proapolipoprotein C-II, the major form found in plasma undergoes proteolytic cleavage of its N-terminal hexapeptide to generate apolipoprotein C-II, which occurs as the minor form in plasma.

It localises to the secreted. In terms of biological role, component of chylomicrons, very low-density lipoproteins (VLDL), low-density lipoproteins (LDL), and high-density lipoproteins (HDL) in plasma. Plays an important role in lipoprotein metabolism as an activator of lipoprotein lipase. Both proapolipoprotein C-II and apolipoprotein C-II can activate lipoprotein lipase. The protein is Apolipoprotein C-II (APOC2) of Aotus nancymaae (Ma's night monkey).